A 388-amino-acid polypeptide reads, in one-letter code: Reducing end xylose-releasing exo-oligoxylanase (388 aa).

E70 serves as the catalytic Proton donor. D263 serves as the catalytic Proton acceptor.

It belongs to the glycosyl hydrolase 8 (cellulase D) family.

The catalysed reaction is Hydrolysis of (1-&gt;4)-beta-D-xylose residues from the reducing end of oligosaccharides.. Hydrolyzes xylooligosaccharides with a degree of polymerization of greater than or equal to 3, releasing xylose from the reducing end. Only hydrolyzes the beta anomers of xylooligosaccharides, with inversion of anomeric configuration. Hydrolyzes the glucose and xylose-based trisaccharides where xylose is located at the -1 subsite, GXX, XXG and GXG. Does not hydrolyze xylan, chitosan, lichenan, curdlan or carboxymethylcellulose. This is Reducing end xylose-releasing exo-oligoxylanase from Halalkalibacterium halodurans (strain ATCC BAA-125 / DSM 18197 / FERM 7344 / JCM 9153 / C-125) (Bacillus halodurans).